Here is a 167-residue protein sequence, read N- to C-terminus: Small ribosomal subunit protein uS5 (167 aa).

The region spanning 12-75 (LEERVVTINR…EDAKKNMVFV (64 aa)) is the S5 DRBM domain.

It belongs to the universal ribosomal protein uS5 family. Part of the 30S ribosomal subunit. Contacts proteins S4 and S8.

With S4 and S12 plays an important role in translational accuracy. In terms of biological role, located at the back of the 30S subunit body where it stabilizes the conformation of the head with respect to the body. The chain is Small ribosomal subunit protein uS5 from Listeria innocua serovar 6a (strain ATCC BAA-680 / CLIP 11262).